The sequence spans 499 residues: GTPase Der (499 aa).

2 consecutive EngA-type G domains span residues 3 to 166 (PVVA…MDEV) and 211 to 384 (IKLA…DCST). GTP is bound by residues 9–16 (GRPNVGKS), 56–60 (DTGGI), 118–121 (NKTD), 217–224 (GRPNVGKS), 264–268 (DTAGV), and 329–332 (NKWD). The 85-residue stretch at 385–469 (RRVNTSMLTR…PIRIQFKEGD (85 aa)) folds into the KH-like domain.

Belongs to the TRAFAC class TrmE-Era-EngA-EngB-Septin-like GTPase superfamily. EngA (Der) GTPase family. Associates with the 50S ribosomal subunit.

GTPase that plays an essential role in the late steps of ribosome biogenesis. This is GTPase Der from Erwinia tasmaniensis (strain DSM 17950 / CFBP 7177 / CIP 109463 / NCPPB 4357 / Et1/99).